The primary structure comprises 487 residues: Probable glutamate receptor (487 aa).

The first 23 residues, 1 to 23 (MDKGLHFIFCVVTAVLLLRESSQ), serve as a signal peptide directing secretion. Residues 24-169 (TGAMRNDDAM…FFHFLAPFSK (146 aa)) lie on the Extracellular side of the membrane. N-linked (GlcNAc...) asparagine glycosylation occurs at Asn104. A helical transmembrane segment spans residues 170 to 190 (ETWTGLLFAYVLTCVCLFLVA). Residues 191 to 235 (RLSPCEWNEPKNEENHFTFLNSLWFGAGALTLQGVTPRPKAFSVR) lie on the Cytoplasmic side of the membrane. Residues 236 to 256 (VIAAIWWLFTIALLAAYIANF) form a helical membrane-spanning segment. The Extracellular portion of the chain corresponds to 257–419 (TALLSSGSEQ…EGWSPLQPQA (163 aa)). Residues 420–440 (LGGLFLTLAIGLALGVIAAMV) traverse the membrane as a helical segment. Residues 441-487 (ELSNKSRHAAGHIKKSCCSIFTEEMCTRLRIKENTRQTQETSGRANA) are Cytoplasmic-facing.

Belongs to the glutamate-gated ion channel (TC 1.A.10.1) family.

It is found in the cell membrane. It localises to the postsynaptic cell membrane. Functionally, receptor for glutamate. L-glutamate acts as an excitatory neurotransmitter at many synapses in the central nervous system. The postsynaptic actions of Glu are mediated by a variety of receptors that are named according to their selective agonists. The sequence is that of Probable glutamate receptor (KBP) from Gallus gallus (Chicken).